A 742-amino-acid chain; its full sequence is Ion-translocating oxidoreductase complex subunit C (742 aa).

4Fe-4S ferredoxin-type domains lie at Gly369–Tyr397 and Lys407–Phe436. Residues Cys377, Cys380, Cys383, Cys387, Cys416, Cys419, Cys422, and Cys426 each contribute to the [4Fe-4S] cluster site. The interval Lys602–Ala719 is disordered.

This sequence belongs to the 4Fe4S bacterial-type ferredoxin family. RnfC subfamily. In terms of assembly, the complex is composed of six subunits: RsxA, RsxB, RsxC, RsxD, RsxE and RsxG. [4Fe-4S] cluster is required as a cofactor.

It localises to the cell inner membrane. Its function is as follows. Part of a membrane-bound complex that couples electron transfer with translocation of ions across the membrane. Required to maintain the reduced state of SoxR. This Escherichia coli O6:H1 (strain CFT073 / ATCC 700928 / UPEC) protein is Ion-translocating oxidoreductase complex subunit C.